Consider the following 248-residue polypeptide: Pulmonary surfactant-associated protein A2 (248 aa).

A signal peptide spans 1 to 20 (MWLCPLALTLILMAASGAAC). The Collagen-like domain occupies 28–100 (GSPGIPGTPG…AGERGPPGLP (73 aa)). A 4-hydroxyproline mark is found at Pro30, Pro33, Pro36, Pro42, Pro54, Pro57, Pro63, Pro67, and Pro70. The tract at residues 33 to 101 (PGTPGSHGLP…GERGPPGLPA (69 aa)) is disordered. Basic and acidic residues predominate over residues 42–51 (PGRDGRDGVK). The segment covering 54–70 (PGPPGPMGPPGETPCPP) has biased composition (pro residues). The segment covering 71 to 82 (GNNGLPGAPGVP) has biased composition (low complexity). The segment covering 84-93 (ERGEKGEAGE) has biased composition (basic and acidic residues). A C-type lectin domain is found at 132 to 248 (MTVGEKVFSS…LYSRLTICEF (117 aa)). Cystine bridges form between Cys155–Cys246 and Cys224–Cys238. Asn207 carries N-linked (GlcNAc...) asparagine glycosylation.

This sequence belongs to the SFTPA family. Oligomeric complex of 6 set of homotrimers. N-acetylated.

It is found in the secreted. It localises to the extracellular space. Its subcellular location is the extracellular matrix. The protein localises to the surface film. In presence of calcium ions, it binds to surfactant phospholipids and contributes to lower the surface tension at the air-liquid interface in the alveoli of the mammalian lung and is essential for normal respiration. The polypeptide is Pulmonary surfactant-associated protein A2 (SFTPA2) (Homo sapiens (Human)).